Here is a 288-residue protein sequence, read N- to C-terminus: Stomatin (288 aa).

The interval 1–22 (MAEKRHTRDSEAQRLPDSFKDS) is disordered. Over 1 to 25 (MAEKRHTRDSEAQRLPDSFKDSPSK) the chain is Cytoplasmic. Residue Ser10 is modified to Phosphoserine; by PKA. Ser18 is subject to Phosphoserine. An intramembrane segment occupies 26–54 (GLGPCGWILVAFSFLFTVITFPISIWMCI). Residue Cys30 is the site of S-palmitoyl cysteine attachment. Residues 55–288 (KIIKEYERAI…IIGAKHSHLG (234 aa)) lie on the Cytoplasmic side of the membrane. The S-palmitoyl cysteine; partial moiety is linked to residue Cys87. Residues Ser161 and Ser244 each carry the phosphoserine modification. The tract at residues 265-273 (STIVFPLPI) is required for homooligomerization. Positions 267-269 (IVF) are required for lipid raft association. The interaction with LANCL1 stretch occupies residues 273-287 (IDMLQGIIGAKHSHL).

The protein belongs to the band 7/mec-2 family. As to quaternary structure, homodimer and higher order homooligomer. The homodimer is banana-shaped. Interacts with ASIC1, ASIC2 and ASIC3. Interacts with LANCL1. Interacts with SLC2A1. Interacts with SLC4A1; this interaction positively regulates SLC4A1 activity. Identified in large complexes with SLC40A1, SLC14A1, SLC29A1 and AQP1. Interacts with STOML1; may redistribute STOM from the plasma membrane to late endosomes. Detected in erythrocytes (at protein level). Widely expressed.

The protein localises to the cell membrane. Its subcellular location is the cytoplasm. It localises to the cytoskeleton. The protein resides in the membrane raft. It is found in the melanosome. The protein localises to the cytoplasmic vesicle. Regulates ion channel activity and transmembrane ion transport. Regulates ASIC2 and ASIC3 channel activity. The polypeptide is Stomatin (Homo sapiens (Human)).